The chain runs to 696 residues: Transcriptional regulatory protein pro1 (696 aa).

The tract at residues 1-48 (MSTQSPNHHEDITKTSSVNMTTTTTTTKTKAAAKAGTNAAPKQKTQMH) is disordered. A compositionally biased stretch (low complexity) spans 21–40 (TTTTTTTKTKAAAKAGTNAA). The zn(2)-C6 fungal-type DNA-binding region spans 55–82 (CYTCRLRRKKCDEGSPMCTACKHLGLCC). The disordered stretch occupies residues 112–145 (LSEKSSHTIQTSINTPPGLSHSLPTSATFSDPLD). The span at 118-140 (HTIQTSINTPPGLSHSLPTSATF) shows a compositional bias: polar residues.

The protein resides in the nucleus. Functionally, may be involved in fruiting body development. The chain is Transcriptional regulatory protein pro1 (adv-1) from Neurospora crassa (strain ATCC 24698 / 74-OR23-1A / CBS 708.71 / DSM 1257 / FGSC 987).